A 125-amino-acid polypeptide reads, in one-letter code: Aspartate 1-decarboxylase (125 aa).

The active-site Schiff-base intermediate with substrate; via pyruvic acid is the Ser-25. At Ser-25 the chain carries Pyruvic acid (Ser). Thr-57 is a binding site for substrate. Residue Tyr-58 is the Proton donor of the active site. Residue 73–75 (GAA) coordinates substrate.

It belongs to the PanD family. Heterooctamer of four alpha and four beta subunits. The cofactor is pyruvate. In terms of processing, is synthesized initially as an inactive proenzyme, which is activated by self-cleavage at a specific serine bond to produce a beta-subunit with a hydroxyl group at its C-terminus and an alpha-subunit with a pyruvoyl group at its N-terminus.

The protein resides in the cytoplasm. It catalyses the reaction L-aspartate + H(+) = beta-alanine + CO2. Its pathway is cofactor biosynthesis; (R)-pantothenate biosynthesis; beta-alanine from L-aspartate: step 1/1. Its function is as follows. Catalyzes the pyruvoyl-dependent decarboxylation of aspartate to produce beta-alanine. The polypeptide is Aspartate 1-decarboxylase (Herpetosiphon aurantiacus (strain ATCC 23779 / DSM 785 / 114-95)).